Reading from the N-terminus, the 55-residue chain is MAKQQDVRPIIKLRSTAGTGYTYVTRKNRRNNPDRLVLKKYDPVVRTHVDFREER.

The protein belongs to the bacterial ribosomal protein bL33 family.

This is Large ribosomal subunit protein bL33 from Clavibacter sepedonicus (Clavibacter michiganensis subsp. sepedonicus).